A 430-amino-acid polypeptide reads, in one-letter code: Histidine--tRNA ligase (430 aa).

It belongs to the class-II aminoacyl-tRNA synthetase family. Homodimer.

It localises to the cytoplasm. It catalyses the reaction tRNA(His) + L-histidine + ATP = L-histidyl-tRNA(His) + AMP + diphosphate + H(+). In Acinetobacter baumannii (strain ATCC 17978 / DSM 105126 / CIP 53.77 / LMG 1025 / NCDC KC755 / 5377), this protein is Histidine--tRNA ligase.